The primary structure comprises 119 residues: Large ribosomal subunit protein uL18 (119 aa).

Residues 1-22 form a disordered region; it reads MGHVEKVARRHKIKTRSKARGQ. The segment covering 8–19 has biased composition (basic residues); that stretch reads ARRHKIKTRSKA.

This sequence belongs to the universal ribosomal protein uL18 family. In terms of assembly, part of the 50S ribosomal subunit; part of the 5S rRNA/L5/L18/L25 subcomplex. Contacts the 5S and 23S rRNAs.

This is one of the proteins that bind and probably mediate the attachment of the 5S RNA into the large ribosomal subunit, where it forms part of the central protuberance. The sequence is that of Large ribosomal subunit protein uL18 from Chlorobium phaeobacteroides (strain BS1).